The chain runs to 304 residues: Virulence protein VirA (304 aa).

Functionally, could be involved in the biosynthesis of a major surface antigen important for virulence. This is Virulence protein VirA (virA) from Vibrio anguillarum (strain ATCC 68554 / 775) (Listonella anguillarum).